Consider the following 91-residue polypeptide: MGLQEDFEQYAEKAKTLPESTSNENKLILYGLYKQATVGDVNTARPGIFAQRDRAKWDAWKAVEGKSKEEAMSDYITKVKQLLEEAAAAAS.

The ACB domain maps to Leu-3–Ala-88. An acyl-CoA contacts are provided by residues Lys-15, Tyr-30–Lys-34, Lys-56, and Tyr-75.

It belongs to the ACBP family. In terms of tissue distribution, highly expressed in leaves. Expressed at low levels in roots and seeds.

The protein localises to the cytoplasm. Its subcellular location is the cytosol. Its function is as follows. Binds medium- and long-chain acyl-CoA esters with high affinity. Can interact in vitro with palmitoyl-CoA, oleoyl-CoA, linoleoyl-CoA and linolenoyl-CoA. Binds phosphatidic acid (PA) and phosphatidylcholine (PC) in vitro. May play a role in the biosynthesis of phospholipids. The chain is Acyl-CoA-binding domain-containing protein 1 from Oryza sativa subsp. japonica (Rice).